The primary structure comprises 413 residues: MTSSRVENSSSRAARKVKLALMGPAFVAAIGYIDPGNFATNIQAGASFGYQLLWVVVWANLMAMLIQVLSAKLGIATGKNLAEQIRDHYPRPVVWFYWVQAEIIAMATDLAEFIGAAIGFKLVLGVSLLQGAVLTGVATFLILMLQRRGQKPLEKVIGGLLLFVAVAYVVELIFSQPALAPLTKGLVIPTLPNGEAVFLAAGVLGATIMPHVIYLHSSLTQHLHGGTRKERYNATRWDVAIAMTIAGFVNLAMMATAAAAFHFNGHTGVADLDQAYRTLEPLLSHAAATIFGLSLVAAGLSSTVVGTLAGQVVMQGFIRFHIPLWFRRAVTMLPSFVVILLGLDPTRILVMSQVLLSFGIALALVPLLIFTSNAQLMGDLVNTRWVRVTGWVIVAIVVSLNGWLIVGSLLGVA.

A run of 11 helical transmembrane segments spans residues 19–39, 46–66, 94–114, 122–142, 156–176, 196–216, 241–261, 290–310, 329–349, 350–370, and 392–412; these read LALM…GNFA, ASFG…AMLI, VWFY…AEFI, LVLG…TFLI, VIGG…IFSQ, AVFL…IYLH, IAMT…AAAF, IFGL…TLAG, AVTM…TRIL, VMSQ…LLIF, and VIVA…LLGV.

Belongs to the NRAMP family.

It is found in the cell inner membrane. Functionally, h(+)-stimulated, divalent metal cation uptake system. This is Divalent metal cation transporter MntH from Klebsiella pneumoniae (strain 342).